Reading from the N-terminus, the 73-residue chain is Conotoxin im23b (73 aa).

An N-terminal signal peptide occupies residues 1-22; the sequence is MIMRMTLTLFVLVVMTAASASG. Positions 23 to 28 are excised as a propeptide; the sequence is DALTEA. Intrachain disulfides connect C34–C41, C45–C55, and C56–C71.

Belongs to the conotoxin K superfamily. In terms of tissue distribution, expressed by the venom duct.

The protein localises to the secreted. Neurotoxin that induces excitatory symptoms in mice following intracranial administration. No symptoms are observed after intraperitoneal and intravenous (tail vein) injections. The polypeptide is Conotoxin im23b (Conus imperialis (Imperial cone)).